Here is a 232-residue protein sequence, read N- to C-terminus: tRNA (guanine-N(1)-)-methyltransferase (232 aa).

Residues G111 and 131-136 (IGDYIL) contribute to the S-adenosyl-L-methionine site.

The protein belongs to the RNA methyltransferase TrmD family. Homodimer.

Its subcellular location is the cytoplasm. The catalysed reaction is guanosine(37) in tRNA + S-adenosyl-L-methionine = N(1)-methylguanosine(37) in tRNA + S-adenosyl-L-homocysteine + H(+). Its function is as follows. Specifically methylates guanosine-37 in various tRNAs. This Bartonella quintana (strain Toulouse) (Rochalimaea quintana) protein is tRNA (guanine-N(1)-)-methyltransferase.